The sequence spans 281 residues: 2-dehydro-3-deoxyphosphooctonate aldolase (281 aa).

This sequence belongs to the KdsA family.

The protein localises to the cytoplasm. It catalyses the reaction D-arabinose 5-phosphate + phosphoenolpyruvate + H2O = 3-deoxy-alpha-D-manno-2-octulosonate-8-phosphate + phosphate. The protein operates within carbohydrate biosynthesis; 3-deoxy-D-manno-octulosonate biosynthesis; 3-deoxy-D-manno-octulosonate from D-ribulose 5-phosphate: step 2/3. It participates in bacterial outer membrane biogenesis; lipopolysaccharide biosynthesis. This Azotobacter vinelandii (strain DJ / ATCC BAA-1303) protein is 2-dehydro-3-deoxyphosphooctonate aldolase.